Reading from the N-terminus, the 291-residue chain is MKRVLLFLATNLAVMLVLSIVLSVLSSFFGISTRGSGGLLLMAAVFGFGGSIISLLMSKWMAKRSYGVQVIEQPRSEIEYWLFNTVQRQAQQTGIGMPEVGIYDSPDMNAFATGANRNKALVAVSSGLLYNMSRDEAEAVLAHEISHVANGDMVTLTLIQGVVNTFVIYISRVLAGIVSNFMRSDDEESSATGGIAYFAISMVFELIFGILASTIVMWFSRQREFRADAGSAKLVGKDKMIAALERLARGHDSQLDGSMMAFGINGKTAMTELFMSHPPLEKRIQALREMR.

2 consecutive transmembrane segments (helical) span residues 4–24 (VLLF…VLSV) and 37–57 (GGLL…SLLM). Position 143 (H143) interacts with Zn(2+). Residue E144 is part of the active site. Position 147 (H147) interacts with Zn(2+). A run of 2 helical transmembrane segments spans residues 158-178 (LIQG…AGIV) and 198-218 (FAIS…IVMW). E224 provides a ligand contact to Zn(2+).

The protein belongs to the peptidase M48B family. Zn(2+) is required as a cofactor.

The protein localises to the cell inner membrane. The chain is Protease HtpX from Tolumonas auensis (strain DSM 9187 / NBRC 110442 / TA 4).